We begin with the raw amino-acid sequence, 482 residues long: Complement C1r subcomponent-like protein (482 aa).

A signal peptide spans 1–43; the sequence is MSGFRGLVPELENSLWSSPTTSCMSKMCWWLLWGILHTCPTQA. Residues 44–166 enclose the CUB domain; it reads SVLLAQQSPQ…KGFLALYQAV (123 aa). Disulfide bonds link Cys-97-Cys-115 and Cys-190-Cys-223. The Sushi domain occupies 166–225; the sequence is VAVNQPNGDTEAVTTPGAPKIQNHCQDPYYKADQTGTLSCPSSWKWKDRQDGGEVPECVP. Residues 240 to 479 enclose the Peptidase S1 domain; the sequence is TFGSSRAKLG…YMDWIKRVIE (240 aa). Catalysis depends on charge relay system residues His-278 and Asp-334. An N-linked (GlcNAc...) asparagine glycan is attached at Asn-358. 2 cysteine pairs are disulfide-bonded: Cys-397-Cys-416 and Cys-427-Cys-457. The active-site Charge relay system is the Ser-431.

Belongs to the peptidase S1 family. As to expression, expressed in liver (at protein level).

The protein resides in the secreted. In terms of biological role, mediates the proteolytic cleavage of HP/haptoglobin in the endoplasmic reticulum. This Mus musculus (Mouse) protein is Complement C1r subcomponent-like protein (C1rl).